The chain runs to 93 residues: Chromosomal protein MC1 (93 aa).

The interval 1–43 is disordered; sequence SNTRNFVLRDEEGNEHGVFTGKQPRQAALKAANRGDGTKSNPD.

Functionally, protects DNA against thermal denaturation and modulates transcription. The polypeptide is Chromosomal protein MC1 (Methanosarcina barkeri).